A 294-amino-acid polypeptide reads, in one-letter code: 33 kDa chaperonin (294 aa).

2 disulfide bridges follow: cysteine 239–cysteine 241 and cysteine 272–cysteine 275.

This sequence belongs to the HSP33 family. Under oxidizing conditions two disulfide bonds are formed involving the reactive cysteines. Under reducing conditions zinc is bound to the reactive cysteines and the protein is inactive.

Its subcellular location is the cytoplasm. Its function is as follows. Redox regulated molecular chaperone. Protects both thermally unfolding and oxidatively damaged proteins from irreversible aggregation. Plays an important role in the bacterial defense system toward oxidative stress. The sequence is that of 33 kDa chaperonin from Lacticaseibacillus paracasei (strain ATCC 334 / BCRC 17002 / CCUG 31169 / CIP 107868 / KCTC 3260 / NRRL B-441) (Lactobacillus paracasei).